The sequence spans 301 residues: Ornithine carbamoyltransferase (301 aa).

Carbamoyl phosphate is bound by residues Arg-100 and 127–130 (HPCQ). Residues Asn-158, Asp-221, and 225 to 226 (SM) contribute to the L-ornithine site. Cys-260 and Arg-288 together coordinate carbamoyl phosphate.

This sequence belongs to the aspartate/ornithine carbamoyltransferase superfamily. OTCase family.

The protein localises to the cytoplasm. It carries out the reaction carbamoyl phosphate + L-ornithine = L-citrulline + phosphate + H(+). The protein operates within amino-acid biosynthesis; L-arginine biosynthesis; L-arginine from L-ornithine and carbamoyl phosphate: step 1/3. Reversibly catalyzes the transfer of the carbamoyl group from carbamoyl phosphate (CP) to the N(epsilon) atom of ornithine (ORN) to produce L-citrulline. This Vibrio sp. (strain 2693) protein is Ornithine carbamoyltransferase (argF).